Here is a 415-residue protein sequence, read N- to C-terminus: Serine--tRNA ligase (415 aa).

Position 231–233 (231–233 (TAE)) interacts with L-serine. ATP is bound at residue 262–264 (RSE). Glu285 serves as a coordination point for L-serine. 349–352 (EISS) is a binding site for ATP. Ser383 is an L-serine binding site.

This sequence belongs to the class-II aminoacyl-tRNA synthetase family. Type-1 seryl-tRNA synthetase subfamily. Homodimer. The tRNA molecule binds across the dimer.

It localises to the cytoplasm. It carries out the reaction tRNA(Ser) + L-serine + ATP = L-seryl-tRNA(Ser) + AMP + diphosphate + H(+). The enzyme catalyses tRNA(Sec) + L-serine + ATP = L-seryl-tRNA(Sec) + AMP + diphosphate + H(+). Its pathway is aminoacyl-tRNA biosynthesis; selenocysteinyl-tRNA(Sec) biosynthesis; L-seryl-tRNA(Sec) from L-serine and tRNA(Sec): step 1/1. In terms of biological role, catalyzes the attachment of serine to tRNA(Ser). Is also able to aminoacylate tRNA(Sec) with serine, to form the misacylated tRNA L-seryl-tRNA(Sec), which will be further converted into selenocysteinyl-tRNA(Sec). The protein is Serine--tRNA ligase of Helicobacter acinonychis (strain Sheeba).